The primary structure comprises 315 residues: Aspartate carbamoyltransferase catalytic subunit (315 aa).

Positions 64 and 65 each coordinate carbamoyl phosphate. Residue lysine 92 participates in L-aspartate binding. Carbamoyl phosphate is bound by residues arginine 114, histidine 142, and glutamine 145. Residues arginine 175 and arginine 229 each coordinate L-aspartate. Carbamoyl phosphate contacts are provided by glycine 270 and proline 271.

It belongs to the aspartate/ornithine carbamoyltransferase superfamily. ATCase family. Heterododecamer (2C3:3R2) of six catalytic PyrB chains organized as two trimers (C3), and six regulatory PyrI chains organized as three dimers (R2).

The catalysed reaction is carbamoyl phosphate + L-aspartate = N-carbamoyl-L-aspartate + phosphate + H(+). It participates in pyrimidine metabolism; UMP biosynthesis via de novo pathway; (S)-dihydroorotate from bicarbonate: step 2/3. Its function is as follows. Catalyzes the condensation of carbamoyl phosphate and aspartate to form carbamoyl aspartate and inorganic phosphate, the committed step in the de novo pyrimidine nucleotide biosynthesis pathway. The polypeptide is Aspartate carbamoyltransferase catalytic subunit (Methylorubrum populi (strain ATCC BAA-705 / NCIMB 13946 / BJ001) (Methylobacterium populi)).